Consider the following 570-residue polypeptide: Glycine--tRNA ligase (570 aa).

Positions 99 and 165 each coordinate substrate. ATP-binding positions include 197-199 (RNE), 207-212 (LRLREF), 324-325 (EC), and 443-446 (GIDR). 212–216 (FTQAE) contacts substrate. 439 to 443 (EPSFG) is a binding site for substrate.

Belongs to the class-II aminoacyl-tRNA synthetase family.

Its subcellular location is the cytoplasm. It carries out the reaction tRNA(Gly) + glycine + ATP = glycyl-tRNA(Gly) + AMP + diphosphate. Catalyzes the attachment of glycine to tRNA(Gly). The chain is Glycine--tRNA ligase from Thermococcus gammatolerans (strain DSM 15229 / JCM 11827 / EJ3).